The primary structure comprises 623 residues: Negative regulator of PDR1-mediated fluconazole resistance JJJ1 (623 aa).

The 67-residue stretch at 4–70 (CYYDLLEVRS…QERAWYDSHK (67 aa)) folds into the J domain. The C2H2-type zinc-finger motif lies at 363–387 (YDCFICKKSFKSEKQLENHIKTKLH). 3 disordered regions span residues 448 to 476 (QSSV…KLSN), 499 to 581 (GADN…NDAK), and 599 to 623 (SHIQ…KKNK). Acidic residues predominate over residues 453–466 (DSEDFTDDNNDTED). A compositionally biased stretch (polar residues) spans 499 to 508 (GADNSETQNA). The span at 525-538 (ELTRILRELEESKT) shows a compositional bias: basic and acidic residues. Basic residues-rich tracts occupy residues 553–564 (KKKTKAKKKKNK) and 612–623 (KVKKGKRSKKNK).

Its subcellular location is the nucleus. Acts as a negative regulator of fluconazole resistance, primarily through down-regulation of the ABC transporter gene CDR1 via inactivation of the PDR1 transcriptional pathway. The sequence is that of Negative regulator of PDR1-mediated fluconazole resistance JJJ1 from Candida glabrata (strain ATCC 2001 / BCRC 20586 / JCM 3761 / NBRC 0622 / NRRL Y-65 / CBS 138) (Yeast).